A 196-amino-acid polypeptide reads, in one-letter code: Peptidyl-tRNA hydrolase (196 aa).

Y21 provides a ligand contact to tRNA. Residue H26 is the Proton acceptor of the active site. TRNA contacts are provided by F72, N74, and N120.

The protein belongs to the PTH family. Monomer.

Its subcellular location is the cytoplasm. It carries out the reaction an N-acyl-L-alpha-aminoacyl-tRNA + H2O = an N-acyl-L-amino acid + a tRNA + H(+). Hydrolyzes ribosome-free peptidyl-tRNAs (with 1 or more amino acids incorporated), which drop off the ribosome during protein synthesis, or as a result of ribosome stalling. In terms of biological role, catalyzes the release of premature peptidyl moieties from peptidyl-tRNA molecules trapped in stalled 50S ribosomal subunits, and thus maintains levels of free tRNAs and 50S ribosomes. The sequence is that of Peptidyl-tRNA hydrolase from Mycobacteroides abscessus (strain ATCC 19977 / DSM 44196 / CCUG 20993 / CIP 104536 / JCM 13569 / NCTC 13031 / TMC 1543 / L948) (Mycobacterium abscessus).